The chain runs to 1055 residues: Ubiquitin carboxyl-terminal hydrolase 25 (1055 aa).

Residues 14-57 enclose the UBA-like domain; the sequence is QKHQQTFLNQLREITGINDTQILQQALKDSNGNLELAVAFLTAK. The segment at 77-102 is SUMO interaction domain (SIM); the sequence is NDRYISVGSQADTNVIDLTGDDKDDL. S85 bears the Phosphoserine mark. The Required for SUMO paralog-specific binding motif lies at 89–95; the sequence is TNVIDLT. 2 UIM domains span residues 97–116 and 123–140; these read DDKDDLQRAIALSLAESNRA and TDEEQAISRVLEASIAEN. A Glycyl lysine isopeptide (Lys-Gly) (interchain with G-Cter in SUMO); alternate cross-link involves residue K99. Residue K99 forms a Glycyl lysine isopeptide (Lys-Gly) (interchain with G-Cter in ubiquitin); alternate linkage. The region spanning 169–657 is the USP domain; the sequence is VGLKNVGNTC…SAYCLMYIND (489 aa). Residue C178 is part of the active site. The tract at residues 464–507 is disordered; it reads VCTSPVDDIDASSPPSGSIPSQTLPSTTEQQGALSSELPSTSPS. Over residues 476 to 496 the composition is skewed to polar residues; the sequence is SPPSGSIPSQTLPSTTEQQGA. Residues 497 to 507 show a composition bias toward low complexity; that stretch reads LSSELPSTSPS. The stretch at 541-578 forms a coiled coil; that stretch reads TEEELSVLESCLHRWRTEIENDTRDLQESISRIHRTIE. Catalysis depends on residues H599 and H607. Positions 684-717 form a coiled coil; sequence DLRDFVEEDNQRFEKELEEWDAQLAQKALQEKLL. Residues 727-749 are disordered; it reads TSVTTAQAAGDPEYLEQPSRSDF. Residue Y740 is modified to Phosphotyrosine.

The protein belongs to the peptidase C19 family. As to quaternary structure, homotetramer, inhibited form. Homodimer, active form. Interacts with ACTA1 (via its C-terminus); the interaction occurs for all isoforms but is strongest for isoform USP25m in muscle differentiating cells. Interacts (isoform USP25m only) with MYBPC1; the interaction prevents proteasomal degradation of MYBPC1. Interacts (isoform USP25m only) with FLNC (via filament repeats 17-18, 20-21 and 24). Interacts with GAPDH. Interacts with SUMO3; the interaction sumoylates efficiently USP25. Interacts with SUMO2; the interaction sumoylates efficiently USP25. Interacts with SUMO1; the interaction only weakly sumoylates USP25. Interacts with SYK; phosphorylates USP25 and regulates USP25 intracellular levels. Post-translationally, acetylated. In terms of processing, sumoylation impairs binding to and hydrolysis of ubiquitin chains. Sumoylated preferentially with SUMO2 or SUMO3. Desumoylated by SENP1. Polyubiquitinated by SMURF1 by promoting the 'Lys-48'-linkage leading to proteasomal degradation. Preferentially monoubiquitinated but can also be polyubiquitinated. Autodeubiquitinated. Ubiquitination activates the enzymatic activity either by preventing sumoylation or by allowing novel interactions. Post-translationally, phosphorylation in the C-terminal by SYK regulates USP25 cellular levels. As to expression, isoform USP25a is found in most adult and fetal tissues; expression is moderately high in testis, pancreas, kidney, skeletal muscle, liver, lung, placenta, heart, but very low in peripheral blood, colon, small intestine, ovary, prostate, thymus and spleen. Expressed in the brain, with high levels in the cerebral cortex. Isoform USP25b is found in all tissues except heart and skeletal muscle. Isoform USP25m is heart and skeletal muscle specific.

It is found in the cytoplasm. The protein resides in the nucleus. The catalysed reaction is Thiol-dependent hydrolysis of ester, thioester, amide, peptide and isopeptide bonds formed by the C-terminal Gly of ubiquitin (a 76-residue protein attached to proteins as an intracellular targeting signal).. Deubiquitinating enzyme that hydrolyzes ubiquitin moieties conjugated to substrates and thus, functions in various biological processes including inflammation and immune response. Modulates the Wnt/beta-catenin pathway by deubiquitinating and stabilizing tankyrases TNKS1 and TNKS2. Regulates KEAP1-NRF2 axis in the defense against oxidative assaults by deubiquitinating KEAP1 and protecting it from degradation leading to degradation of the NRF2 transcription factor that is responsible for mounting an anti-oxidation gene expression program. Positively regulates RNA virus-induced innate signaling by interacting with and deubiquitinating ERLIN1 and ERLIN2. In turn, restricts virus production by regulating cholesterol biosynthetic flux. Acts as a negative regulator of interleukin-17-mediated signaling and inflammation through the removal of 'Lys-63'-linked ubiquitination of TRAF5 and TRAF6. Prevents the ubiquitination and degradation of TRAF3 to reduce the phosphorylation levels of JNK and P38, the secretion of IL-1B and to induce endotoxin tolerance. Functionally, the muscle-specific isoform (USP25m) may have a role in the regulation of muscular differentiation and function. This Homo sapiens (Human) protein is Ubiquitin carboxyl-terminal hydrolase 25 (USP25).